The chain runs to 30 residues: ASAAGAVRAGDDETLLKPVLNSLDNLVSGL.

Leucine 30 carries the post-translational modification Leucine amide.

As to expression, expressed by the skin dorsal glands.

It is found in the secreted. Functionally, lacks antimicrobial activity. Does not inhibit the formation of NO by neuronal nitric oxide. In Litoria rothii (Roth's tree frog), this protein is Rothein 3.1.